The following is a 132-amino-acid chain: Glycine cleavage system H protein (132 aa).

In terms of domain architecture, Lipoyl-binding spans 24-106; the sequence is TVRVGITDFA…YGAGWLLDVQ (83 aa). Lys-65 bears the N6-lipoyllysine mark.

Belongs to the GcvH family. In terms of assembly, the glycine cleavage system is composed of four proteins: P, T, L and H. It depends on (R)-lipoate as a cofactor.

In terms of biological role, the glycine cleavage system catalyzes the degradation of glycine. The H protein shuttles the methylamine group of glycine from the P protein to the T protein. In Mycobacterium avium (strain 104), this protein is Glycine cleavage system H protein.